The chain runs to 267 residues: MSKATYKERAATHPSPVAAKLFNIMHEKQTNLCASLDVRTTKELLELVEALGPKICLLKTHVDILTDFSMEGTVKPLKALSAKYNFLLFEDRKFADIGNTVKLQYSAGVYRIAEWADITNAHGVVGPGIVSGLKQAAEEVTKEPRGLLMLAELSCKGSLATGEYTKGTVDIAKSDKDFVIGFIAQRDMGGRDEGYDWLIMTPGVGLDDKGDALGQQYRTVDDVVSTGSDIIIVGRGLFAKGRDAKVEGERYRKAGWEAYLRRCGQQN.

At Ser-2 the chain carries N-acetylserine. Substrate-binding positions include Asp-37, 59–61, and 91–100; these read KTH and DRKFADIGNT. Lys-93 acts as the Proton donor in catalysis. Residues Lys-93 and Lys-209 each participate in a glycyl lysine isopeptide (Lys-Gly) (interchain with G-Cter in ubiquitin) cross-link. Residues Tyr-217 and Arg-235 each coordinate substrate. A Glycyl lysine isopeptide (Lys-Gly) (interchain with G-Cter in ubiquitin) cross-link involves residue Lys-253.

The protein belongs to the OMP decarboxylase family.

The catalysed reaction is orotidine 5'-phosphate + H(+) = UMP + CO2. Its pathway is pyrimidine metabolism; UMP biosynthesis via de novo pathway; UMP from orotate: step 2/2. This is Orotidine 5'-phosphate decarboxylase (URA3) from Saccharomyces cerevisiae (strain ATCC 204508 / S288c) (Baker's yeast).